The sequence spans 212 residues: Probable U3 small nucleolar RNA-associated protein 11 (212 aa).

The protein belongs to the UTP11 family. As to quaternary structure, component of the ribosomal small subunit (SSU) processome.

It localises to the nucleus. It is found in the nucleolus. Involved in nucleolar processing of pre-18S ribosomal RNA. This chain is Probable U3 small nucleolar RNA-associated protein 11, found in Plasmodium falciparum (isolate 3D7).